The sequence spans 397 residues: Phosphoribulokinase, chloroplastic (397 aa).

The transit peptide at 1-44 directs the protein to the chloroplast; the sequence is MAVSAYTVPTTSHLGFNQKKQLFFCNKSAYKRVSFSSRPCVITC. Cysteine 62 and cysteine 101 are joined by a disulfide.

Belongs to the phosphoribulokinase family.

It localises to the plastid. Its subcellular location is the chloroplast. It carries out the reaction D-ribulose 5-phosphate + ATP = D-ribulose 1,5-bisphosphate + ADP + H(+). Its pathway is carbohydrate biosynthesis; Calvin cycle. Its activity is regulated as follows. Light regulated via thioredoxin by reversible oxidation/reduction of sulfhydryl/disulfide groups. This chain is Phosphoribulokinase, chloroplastic, found in Mesembryanthemum crystallinum (Common ice plant).